The chain runs to 265 residues: Mlc titration factor A (265 aa).

Residues histidine 111, histidine 148, histidine 152, and glutamate 211 each contribute to the Zn(2+) site.

This sequence belongs to the MtfA family. In terms of assembly, interacts with Mlc. Zn(2+) is required as a cofactor.

It is found in the cytoplasm. Its function is as follows. Involved in the modulation of the activity of the glucose-phosphotransferase system (glucose-PTS). Interacts with the transcriptional repressor Mlc, preventing its interaction with DNA and leading to the modulation of expression of genes regulated by Mlc, including ptsG, which encodes the PTS system glucose-specific EIICB component. In terms of biological role, shows zinc-dependent metallopeptidase activity. This chain is Mlc titration factor A, found in Escherichia coli O9:H4 (strain HS).